A 269-amino-acid chain; its full sequence is Tryptophan synthase alpha chain (269 aa).

Residues Glu-49 and Asp-60 each act as proton acceptor in the active site.

The protein belongs to the TrpA family. In terms of assembly, tetramer of two alpha and two beta chains.

It catalyses the reaction (1S,2R)-1-C-(indol-3-yl)glycerol 3-phosphate + L-serine = D-glyceraldehyde 3-phosphate + L-tryptophan + H2O. Its pathway is amino-acid biosynthesis; L-tryptophan biosynthesis; L-tryptophan from chorismate: step 5/5. The alpha subunit is responsible for the aldol cleavage of indoleglycerol phosphate to indole and glyceraldehyde 3-phosphate. This is Tryptophan synthase alpha chain from Enterobacter sp. (strain 638).